We begin with the raw amino-acid sequence, 145 residues long: Large ribosomal subunit protein uL15 (145 aa).

The interval 20-54 (GRGMASGKGKTATRGHKGQNSRSGGGVRPGFEGGQ) is disordered. Positions 42-52 (SGGGVRPGFEG) are enriched in gly residues.

It belongs to the universal ribosomal protein uL15 family. As to quaternary structure, part of the 50S ribosomal subunit.

In terms of biological role, binds to the 23S rRNA. The sequence is that of Large ribosomal subunit protein uL15 from Mycoplasma mycoides subsp. mycoides SC (strain CCUG 32753 / NCTC 10114 / PG1).